Reading from the N-terminus, the 133-residue chain is ATP synthase epsilon chain (133 aa).

It belongs to the ATPase epsilon chain family. As to quaternary structure, F-type ATPases have 2 components, CF(1) - the catalytic core - and CF(0) - the membrane proton channel. CF(1) has five subunits: alpha(3), beta(3), gamma(1), delta(1), epsilon(1). CF(0) has three main subunits: a, b and c.

It is found in the cell membrane. Its function is as follows. Produces ATP from ADP in the presence of a proton gradient across the membrane. This is ATP synthase epsilon chain from Bacillus anthracis (strain A0248).